A 508-amino-acid polypeptide reads, in one-letter code: Glycerol kinase (508 aa).

Position 14 (threonine 14) interacts with ADP. Positions 14, 15, and 16 each coordinate ATP. Threonine 14 is a sn-glycerol 3-phosphate binding site. Residue arginine 18 coordinates ADP. The sn-glycerol 3-phosphate site is built by arginine 84, glutamate 85, and tyrosine 136. Glycerol contacts are provided by arginine 84, glutamate 85, and tyrosine 136. Histidine 232 bears the Phosphohistidine; by HPr mark. Sn-glycerol 3-phosphate is bound at residue aspartate 246. Positions 246 and 247 each coordinate glycerol. The ADP site is built by threonine 268 and glycine 311. The ATP site is built by threonine 268, glycine 311, glutamine 315, and glycine 412. Residues glycine 412 and asparagine 416 each coordinate ADP.

This sequence belongs to the FGGY kinase family. Homotetramer and homodimer (in equilibrium). In terms of processing, the phosphoenolpyruvate-dependent sugar phosphotransferase system (PTS), including enzyme I, and histidine-containing protein (HPr) are required for the phosphorylation, which leads to the activation of the enzyme.

The catalysed reaction is glycerol + ATP = sn-glycerol 3-phosphate + ADP + H(+). Its pathway is polyol metabolism; glycerol degradation via glycerol kinase pathway; sn-glycerol 3-phosphate from glycerol: step 1/1. With respect to regulation, activated by phosphorylation and inhibited by fructose 1,6-bisphosphate (FBP). Functionally, key enzyme in the regulation of glycerol uptake and metabolism. Catalyzes the phosphorylation of glycerol to yield sn-glycerol 3-phosphate. The polypeptide is Glycerol kinase (Streptococcus pyogenes serotype M12 (strain MGAS2096)).